The chain runs to 142 residues: MKLSADDKHNVKAIWEHVKGHEEAIGAEALCRMFTSLPTTRTYFPTKDIKEGSSFLHSHGKKVMGALSNAVAHIDDIDGALSKLSDKHAEELMVDPANFPKLAHNILVVLGIHLKPHLTYSVHSSVDKFLATVGYVLASKYR.

Residues K2 to R142 enclose the Globin domain. H59 provides a ligand contact to O2. Residue H88 participates in heme b binding.

Belongs to the globin family. In terms of assembly, major hemoglobin is a heterotetramer of two alpha-1 chains and two beta-1 chains. As to expression, red blood cells.

Its function is as follows. Involved in oxygen transport from the lung to the various peripheral tissues. The protein is Hemoglobin subunit alpha-1 of Triturus cristatus (Great crested newt).